A 308-amino-acid polypeptide reads, in one-letter code: Transaldolase (308 aa).

Lys125 functions as the Schiff-base intermediate with substrate in the catalytic mechanism.

It belongs to the transaldolase family. Type 1 subfamily. In terms of assembly, homodimer.

It localises to the cytoplasm. The catalysed reaction is D-sedoheptulose 7-phosphate + D-glyceraldehyde 3-phosphate = D-erythrose 4-phosphate + beta-D-fructose 6-phosphate. Its pathway is carbohydrate degradation; pentose phosphate pathway; D-glyceraldehyde 3-phosphate and beta-D-fructose 6-phosphate from D-ribose 5-phosphate and D-xylulose 5-phosphate (non-oxidative stage): step 2/3. Transaldolase is important for the balance of metabolites in the pentose-phosphate pathway. The protein is Transaldolase of Pseudomonas putida (strain W619).